The chain runs to 111 residues: Large ribosomal subunit protein P2 (111 aa).

The disordered stretch occupies residues 62-111 (LASVPSGGAGGAAAAGGAAAAGGAAEAAPEEAKEEEKEESDDDMGFGLFD). Low complexity predominate over residues 76–88 (AGGAAAAGGAAEA). Phosphoserine is present on serine 101.

It belongs to the eukaryotic ribosomal protein P1/P2 family. P1 and P2 exist as dimers at the large ribosomal subunit.

In terms of biological role, plays an important role in the elongation step of protein synthesis. This chain is Large ribosomal subunit protein P2, found in Podospora anserina (Pleurage anserina).